Here is a 675-residue protein sequence, read N- to C-terminus: PTS system glucose-specific EIICBA component (675 aa).

A PTS EIIC type-1 domain is found at 3-414 (KKLFGQMQRI…FNYKTPGRED (412 aa)). The next 11 helical transmembrane spans lie at 16-36 (LMLP…GTAF), 59-79 (MLTG…ALGV), 81-101 (IGLA…FIIL), 126-146 (VLGI…GALA), 170-190 (FVPI…AIIW), 211-231 (LAVF…LHHI), 273-293 (FMQG…LAIY), 303-323 (VVAG…ITEP), 328-348 (FLFV…LSFL), 355-375 (VHLG…GILP), and 378-398 (TAWW…YFVF). One can recognise a PTS EIIB type-1 domain in the interval 425 to 506 (SQLPFDVLKA…AKIISGEITK (82 aa)). The Phosphocysteine intermediate; for EIIB activity role is filled by Cys447. The PTS EIIA type-1 domain maps to 547-651 (DKVFSEKMMG…SIITPVIITN (105 aa)). Residue His599 is the Tele-phosphohistidine intermediate; for EIIA activity of the active site.

The protein resides in the cell membrane. It catalyses the reaction N(pros)-phospho-L-histidyl-[protein] + D-glucose(out) = D-glucose 6-phosphate(in) + L-histidyl-[protein]. Its function is as follows. The phosphoenolpyruvate-dependent sugar phosphotransferase system (sugar PTS), a major carbohydrate active transport system, catalyzes the phosphorylation of incoming sugar substrates concomitantly with their translocation across the cell membrane. This system is involved in glucose transport. The sequence is that of PTS system glucose-specific EIICBA component (ptsG) from Staphylococcus epidermidis.